The sequence spans 213 residues: Uracil phosphoribosyltransferase (213 aa).

5-phospho-alpha-D-ribose 1-diphosphate is bound by residues Arg-78, Arg-103, and 130–138 (DPMLATGGS). Uracil contacts are provided by residues Ile-197 and 202–204 (GDA). Position 203 (Asp-203) interacts with 5-phospho-alpha-D-ribose 1-diphosphate.

It belongs to the UPRTase family. Mg(2+) is required as a cofactor.

The catalysed reaction is UMP + diphosphate = 5-phospho-alpha-D-ribose 1-diphosphate + uracil. The protein operates within pyrimidine metabolism; UMP biosynthesis via salvage pathway; UMP from uracil: step 1/1. With respect to regulation, allosterically activated by GTP. In terms of biological role, catalyzes the conversion of uracil and 5-phospho-alpha-D-ribose 1-diphosphate (PRPP) to UMP and diphosphate. The chain is Uracil phosphoribosyltransferase from Cutibacterium acnes (strain DSM 16379 / KPA171202) (Propionibacterium acnes).